The following is an 844-amino-acid chain: Penicillin-binding protein 1B (844 aa).

The span at 1–10 (MAGNDREPIG) shows a compositional bias: basic and acidic residues. The interval 1-60 (MAGNDREPIGRKGKPTRPVKQKVSRRRYEDDDDYDDYDDYEDEEPMPRKGKGKGKGRKPR) is disordered. Residues 1–63 (MAGNDREPIG…GKGRKPRGKR (63 aa)) lie on the Cytoplasmic side of the membrane. Residues 11 to 25 (RKGKPTRPVKQKVSR) show a composition bias toward basic residues. The span at 30 to 44 (DDDDYDDYDDYEDEE) shows a compositional bias: acidic residues. Over residues 48 to 60 (RKGKGKGKGRKPR) the composition is skewed to basic residues. A helical; Signal-anchor for type II membrane protein membrane pass occupies residues 64-87 (GWLWLLLKLAIVFAVLIAIYGVYL). A membrane association region spans residues 88 to 250 (DQKIRSRIDG…DGISLYSIGR (163 aa)). The Periplasmic portion of the chain corresponds to 88–844 (DQKIRSRIDG…GWIKDMFGSN (757 aa)). A uvrB domain 2 homolog region spans residues 109 to 200 (RMVNLEPDMT…QFGFFRLDPR (92 aa)). The interval 195–367 (FRLDPRLITM…SIYNPWRNPK (173 aa)) is transglycosylase. The active-site Proton donor; for transglycosylase activity is Glu233. Residues 444–736 (SVAQDAAEKA…NNQPTKLYGA (293 aa)) are transpeptidase. The Acyl-ester intermediate; for transpeptidase activity role is filled by Ser510. The segment covering 793–825 (LCQQSEMQQQPSGNPFDQSSQPQQQPQQQPAQQ) has biased composition (low complexity). A disordered region spans residues 793 to 835 (LCQQSEMQQQPSGNPFDQSSQPQQQPQQQPAQQEQKDSDGVAG).

It in the N-terminal section; belongs to the glycosyltransferase 51 family. This sequence in the C-terminal section; belongs to the transpeptidase family. In terms of assembly, forms a trimeric complex with MipA and MltA. Has also been shown to exist as monomer or homodimer; homodimer of Alpha and Gamma isozymes can be found. Interacts with UvrA, FtsL and FtsN.

The protein resides in the cell inner membrane. The enzyme catalyses [GlcNAc-(1-&gt;4)-Mur2Ac(oyl-L-Ala-gamma-D-Glu-L-Lys-D-Ala-D-Ala)](n)-di-trans,octa-cis-undecaprenyl diphosphate + beta-D-GlcNAc-(1-&gt;4)-Mur2Ac(oyl-L-Ala-gamma-D-Glu-L-Lys-D-Ala-D-Ala)-di-trans,octa-cis-undecaprenyl diphosphate = [GlcNAc-(1-&gt;4)-Mur2Ac(oyl-L-Ala-gamma-D-Glu-L-Lys-D-Ala-D-Ala)](n+1)-di-trans,octa-cis-undecaprenyl diphosphate + di-trans,octa-cis-undecaprenyl diphosphate + H(+). The catalysed reaction is Preferential cleavage: (Ac)2-L-Lys-D-Ala-|-D-Ala. Also transpeptidation of peptidyl-alanyl moieties that are N-acyl substituents of D-alanine.. It functions in the pathway cell wall biogenesis; peptidoglycan biosynthesis. In terms of biological role, cell wall formation. Synthesis of cross-linked peptidoglycan from the lipid intermediates. The enzyme has a penicillin-insensitive transglycosylase N-terminal domain (formation of linear glycan strands) and a penicillin-sensitive transpeptidase C-terminal domain (cross-linking of the peptide subunits). This Escherichia coli (strain K12) protein is Penicillin-binding protein 1B (mrcB).